Here is a 326-residue protein sequence, read N- to C-terminus: tRNA-modifying protein YgfZ (326 aa).

Residues Trp-27 and Trp-189 each coordinate folate.

The protein belongs to the tRNA-modifying YgfZ family.

The protein localises to the cytoplasm. In terms of biological role, folate-binding protein involved in regulating the level of ATP-DnaA and in the modification of some tRNAs. It is probably a key factor in regulatory networks that act via tRNA modification, such as initiation of chromosomal replication. The polypeptide is tRNA-modifying protein YgfZ (Escherichia coli (strain SMS-3-5 / SECEC)).